The sequence spans 715 residues: MSMFNKVVKEFQWGQHKVRLETGEIARQASGAVIVDVEDTVVLATVVGAKSAKPGQDFFPLTVDYIEKTYSAGKIPGGFFRREGRPSEHETLTSRLIDRPLRPLFPEGFYNEVQVVIHVLSVNPEIPADIPALIGASAALAVSGLPFNGPVGAARVAYVNDQYVLNPTREQLKSSRLDLVVAGTERAVLMVESEADQLPEEVMLGAVVFGHEQMQTAIDAIHELVRDGGKPEWDWQPAPKDEALIARVTEIAQPELLAAYQIRDKQARSTKLKEVYAATSAKLEEDALAAGTVAADKATVGNILFDLEAKIVRGQILNGEPRIDGRDTRTVRPIEIRTGVLPRTHGSALFTRGETQALVVATLGTKGDEQIIDALEGEYRERFMLHYNMPPFATGETGRVGSPKRREIGHGRLAKRALVACLPSAEEFGYSIRVVSEITESNGSSSMASVCGGCLALMDAGVPMKAHVAGIAMGLILEGNKFAVLTDILGDEDHLGDMDFKVAGTAQGVTALQMDIKIQGITKEIMQVALAQAKEGRMHILGKMTEAVAGANTQLSEFAPRMITIKINPEKIRDVIGKGGSVIRALTEETGTTIDISDDGVVTIASTSSEGMAEAKKRIENITAEIEVGQVYEGTVLKLLDFGAIVNLLPGKDGLLHISEIVNERVKDINDYLKEGQQVKVKVIQTDEKGRVRLSAKALLNEAAAAAQSDTPPQQ.

Mg(2+)-binding residues include Asp-493 and Asp-499. In terms of domain architecture, KH spans 560-619 (PRMITIKINPEKIRDVIGKGGSVIRALTEETGTTIDISDDGVVTIASTSSEGMAEAKKRI). Positions 629-697 (GQVYEGTVLK…EKGRVRLSAK (69 aa)) constitute an S1 motif domain.

The protein belongs to the polyribonucleotide nucleotidyltransferase family. It depends on Mg(2+) as a cofactor.

It is found in the cytoplasm. It catalyses the reaction RNA(n+1) + phosphate = RNA(n) + a ribonucleoside 5'-diphosphate. Its function is as follows. Involved in mRNA degradation. Catalyzes the phosphorolysis of single-stranded polyribonucleotides processively in the 3'- to 5'-direction. The chain is Polyribonucleotide nucleotidyltransferase from Burkholderia multivorans (strain ATCC 17616 / 249).